We begin with the raw amino-acid sequence, 96 residues long: Protein RnfH (96 aa).

This sequence belongs to the UPF0125 (RnfH) family.

The chain is Protein RnfH from Cronobacter sakazakii (strain ATCC BAA-894) (Enterobacter sakazakii).